A 245-amino-acid polypeptide reads, in one-letter code: Chlorophyll a-b binding protein 1B-21, chloroplastic (245 aa).

A chloroplast-targeting transit peptide spans 1-44 (MASSSGLRSCSAVGVPSLLAPSSRSGRSGLPFCAYATTSGRVTM). W48 is a chlorophyll b binding site. 3 residues coordinate chlorophyll a: F68, E87, and H90. Residue R92 coordinates chlorophyll b. A helical membrane pass occupies residues 93 to 113 (WAMLCVPGVLVPEALGLGNWV). L129 contributes to the chlorophyll a binding site. A helical transmembrane segment spans residues 132-152 (PVPWGNLPTILAIEFLAIAFA). Positions 133, 153, and 156 each coordinate chlorophyll b. Residues K190, E191, N194, R196, Q208, and H224 each contribute to the chlorophyll a site.

Belongs to the light-harvesting chlorophyll a/b-binding (LHC) protein family. The LHC complex consists of chlorophyll a-b binding proteins. Requires Binds at least 14 chlorophylls (8 Chl-a and 6 Chl-b) and carotenoids such as lutein and neoxanthin. as cofactor. Photoregulated by reversible phosphorylation of its threonine residues.

It localises to the plastid. The protein resides in the chloroplast thylakoid membrane. Functionally, the light-harvesting complex (LHC) functions as a light receptor, it captures and delivers excitation energy to photosystems with which it is closely associated. This chain is Chlorophyll a-b binding protein 1B-21, chloroplastic (LHC Ib-21), found in Hordeum vulgare (Barley).